An 880-amino-acid polypeptide reads, in one-letter code: MOG interacting and ectopic P-granules protein 1 (880 aa).

Residues methionine 1–threonine 20 show a composition bias toward polar residues. Disordered regions lie at residues methionine 1–aspartate 37, aspartate 82–glutamate 257, and glutamate 350–proline 370. Over residues methionine 23–aspartate 37 the composition is skewed to basic and acidic residues. The segment covering alanine 87 to valine 105 has biased composition (polar residues). A compositionally biased stretch (acidic residues) spans glutamate 108 to asparagine 120. 2 stretches are compositionally biased toward basic and acidic residues: residues serine 154–serine 170 and lysine 183–threonine 193. Over residues glutamine 215–glutamine 224 the composition is skewed to acidic residues. Composition is skewed to basic and acidic residues over residues glutamine 235–proline 252 and glutamate 350–glutamine 364. 2 consecutive C2H2-type zinc fingers follow at residues serine 436–histidine 459 and phenylalanine 465–histidine 488. The CCHC-type zinc finger occupies tyrosine 501–cysteine 523. C2H2-type zinc fingers lie at residues phenylalanine 728 to histidine 751, leucine 768 to histidine 791, glycine 809 to histidine 830, and tyrosine 841 to histidine 864.

As to quaternary structure, interacts with hda-1, let-418, lin-1, mog-1, mog-4, mog-5, mog-6, pie-1 and unc-98.

Its subcellular location is the nucleus. In terms of biological role, has a broad role in development, specifically in the genetic pathway SynMuvB that negatively regulates specification of the vulval cell fate. Required for fem-3 3'-UTR-mediated repression in the regulation of the sperm/oocyte switch. Acts by regulating the translation of fem-3 mRNA, by binding to its 3'-UTR. The sequence is that of MOG interacting and ectopic P-granules protein 1 from Caenorhabditis briggsae.